A 361-amino-acid polypeptide reads, in one-letter code: tRNA/tmRNA (uracil-C(5))-methyltransferase (361 aa).

Residues Q185, Y213, N218, E234, and D294 each contribute to the S-adenosyl-L-methionine site. C319 acts as the Nucleophile in catalysis. E353 functions as the Proton acceptor in the catalytic mechanism.

It belongs to the class I-like SAM-binding methyltransferase superfamily. RNA M5U methyltransferase family. TrmA subfamily.

The catalysed reaction is uridine(54) in tRNA + S-adenosyl-L-methionine = 5-methyluridine(54) in tRNA + S-adenosyl-L-homocysteine + H(+). The enzyme catalyses uridine(341) in tmRNA + S-adenosyl-L-methionine = 5-methyluridine(341) in tmRNA + S-adenosyl-L-homocysteine + H(+). Functionally, dual-specificity methyltransferase that catalyzes the formation of 5-methyluridine at position 54 (m5U54) in all tRNAs, and that of position 341 (m5U341) in tmRNA (transfer-mRNA). The chain is tRNA/tmRNA (uracil-C(5))-methyltransferase from Pseudomonas putida (strain W619).